The sequence spans 262 residues: Phosphomannomutase 1 (262 aa).

N-acetylalanine is present on A2. D19 acts as the Nucleophile in catalysis. Positions 19 and 21 each coordinate Mg(2+). D21 functions as the Proton donor/acceptor in the catalytic mechanism. Alpha-D-mannose 1-phosphate is bound by residues R28, R132, R143, R150, M186, S188, and D190. Mg(2+)-binding residues include N218, Y230, D232, and T235. The residue at position 242 (S242) is a Phosphoserine.

Belongs to the eukaryotic PMM family. In terms of assembly, homodimer. Mg(2+) serves as cofactor. Present in brain, where it is restricted to neuronal cell bodies. Present at lower levels in pancreas, liver, lung, gonads, uterus, adrenal glands and pituitary (at protein level). Undetectable in intestine.

It localises to the cytoplasm. The catalysed reaction is alpha-D-mannose 1-phosphate = D-mannose 6-phosphate. Its pathway is nucleotide-sugar biosynthesis; GDP-alpha-D-mannose biosynthesis; alpha-D-mannose 1-phosphate from D-fructose 6-phosphate: step 2/2. With respect to regulation, IMP, a metabolite whose concentration is elevated in anoxia, inhibits phosphomannomutase and phosphoglucomutase activities and strongly enhances glucose-1,6-bisphosphatase activity. Involved in the synthesis of the GDP-mannose and dolichol-phosphate-mannose required for a number of critical mannosyl transfer reactions. In addition, may be responsible for the degradation of glucose-1,6-bisphosphate in ischemic brain. This chain is Phosphomannomutase 1 (Pmm1), found in Mus musculus (Mouse).